Reading from the N-terminus, the 1314-residue chain is E3 ubiquitin-protein ligase RNF123 (1314 aa).

Position 2 is an N-acetylalanine (Ala-2). Residues 74-254 (VDSEDNESQG…VAFNFGSRPL (181 aa)) enclose the B30.2/SPRY domain. The disordered stretch occupies residues 460 to 483 (HRSSRESRDGKEAREETTEERQRR). The segment covering 462-483 (SSRESRDGKEAREETTEERQRR) has biased composition (basic and acidic residues). Ser-675 bears the Phosphoserine mark. At Arg-683 the chain carries Asymmetric dimethylarginine. The tract at residues 968 to 974 (WILVRLW) is interaction with NFKB1. Cys-1254, Cys-1257, Cys-1269, His-1271, Cys-1274, Cys-1277, Cys-1288, and Cys-1291 together coordinate Zn(2+). An RING-type zinc finger spans residues 1254 to 1292 (CPICYAHPISAVFQPCGHKSCKACINQHLMNNKDCFFCK).

Component of the KPC complex composed of RNF123/KPC1 and UBAC1/KPC2. Interacts with UBAC1 and CDKN1B via its N-terminal domain. Interacts with RIGI (via N-terminus) and IFIH1 (via N-terminus). Ubiquitinated, leading to its degradation. Deubiquitinated by USP19, thereby stimulating CDKN1B ubiquitin-dependent degradation.

It is found in the cytoplasm. It carries out the reaction S-ubiquitinyl-[E2 ubiquitin-conjugating enzyme]-L-cysteine + [acceptor protein]-L-lysine = [E2 ubiquitin-conjugating enzyme]-L-cysteine + N(6)-ubiquitinyl-[acceptor protein]-L-lysine.. Its pathway is protein modification; protein ubiquitination. Catalytic subunit of the KPC complex that acts as E3 ubiquitin-protein ligase. Promotes the ubiquitination and proteasome-mediated degradation of CDKN1B which is the cyclin-dependent kinase inhibitor at the G0-G1 transition of the cell cycle. Also acts as a key regulator of the NF-kappa-B signaling by promoting maturation of the NFKB1 component of NF-kappa-B: acts by catalyzing ubiquitination of the NFKB1 p105 precursor, leading to limited proteasomal degradation of NFKB1 p105 and generation of the active NFKB1 p50 subunit. Functions also as an inhibitor of innate antiviral signaling mediated by RIGI and IFIH1 independently of its E3 ligase activity. Interacts with the N-terminal CARD domains of RIGI and IFIH1 and competes with the downstream adapter MAVS. In Mus musculus (Mouse), this protein is E3 ubiquitin-protein ligase RNF123 (Rnf123).